Consider the following 202-residue polypeptide: Glycerol-3-phosphate acyltransferase (202 aa).

6 consecutive transmembrane segments (helical) span residues M2–I22, F54–L74, F85–Y105, V120–L140, K141–S161, and L162–I182.

This sequence belongs to the PlsY family. In terms of assembly, probably interacts with PlsX.

Its subcellular location is the cell membrane. It catalyses the reaction an acyl phosphate + sn-glycerol 3-phosphate = a 1-acyl-sn-glycero-3-phosphate + phosphate. It functions in the pathway lipid metabolism; phospholipid metabolism. Catalyzes the transfer of an acyl group from acyl-phosphate (acyl-PO(4)) to glycerol-3-phosphate (G3P) to form lysophosphatidic acid (LPA). This enzyme utilizes acyl-phosphate as fatty acyl donor, but not acyl-CoA or acyl-ACP. The sequence is that of Glycerol-3-phosphate acyltransferase from Staphylococcus aureus (strain bovine RF122 / ET3-1).